We begin with the raw amino-acid sequence, 123 residues long: Ig heavy chain V region HPCG14 (123 aa).

The Ig-like domain maps to 1–114 (EVKLVESGGG…GYDYWFDVWG (114 aa)).

This chain is Ig heavy chain V region HPCG14, found in Mus musculus (Mouse).